The sequence spans 362 residues: 2-aminoethylphosphonate--pyruvate transaminase (362 aa).

At Lys-193 the chain carries N6-(pyridoxal phosphate)lysine.

The protein belongs to the class-V pyridoxal-phosphate-dependent aminotransferase family. PhnW subfamily. In terms of assembly, homodimer. Pyridoxal 5'-phosphate serves as cofactor.

The catalysed reaction is (2-aminoethyl)phosphonate + pyruvate = phosphonoacetaldehyde + L-alanine. In terms of biological role, involved in phosphonate degradation. The polypeptide is 2-aminoethylphosphonate--pyruvate transaminase (Bacteroides fragilis (strain YCH46)).